Reading from the N-terminus, the 118-residue chain is Large ribosomal subunit protein uL24c (118 aa).

The protein belongs to the universal ribosomal protein uL24 family. As to quaternary structure, part of the 50S ribosomal subunit.

The protein resides in the plastid. It is found in the organellar chromatophore. Its function is as follows. One of two assembly initiator proteins, it binds directly to the 5'-end of the 23S rRNA, where it nucleates assembly of the 50S subunit. This chain is Large ribosomal subunit protein uL24c (rpl24), found in Paulinella chromatophora.